We begin with the raw amino-acid sequence, 319 residues long: Aspartate carbamoyltransferase catalytic subunit (319 aa).

Carbamoyl phosphate contacts are provided by Arg-59 and Thr-60. Lys-87 lines the L-aspartate pocket. 3 residues coordinate carbamoyl phosphate: Arg-109, His-137, and Gln-140. Positions 170 and 224 each coordinate L-aspartate. Carbamoyl phosphate contacts are provided by Gly-265 and Pro-266.

It belongs to the aspartate/ornithine carbamoyltransferase superfamily. ATCase family. As to quaternary structure, heterododecamer (2C3:3R2) of six catalytic PyrB chains organized as two trimers (C3), and six regulatory PyrI chains organized as three dimers (R2).

The catalysed reaction is carbamoyl phosphate + L-aspartate = N-carbamoyl-L-aspartate + phosphate + H(+). Its pathway is pyrimidine metabolism; UMP biosynthesis via de novo pathway; (S)-dihydroorotate from bicarbonate: step 2/3. Functionally, catalyzes the condensation of carbamoyl phosphate and aspartate to form carbamoyl aspartate and inorganic phosphate, the committed step in the de novo pyrimidine nucleotide biosynthesis pathway. In Gemmatimonas aurantiaca (strain DSM 14586 / JCM 11422 / NBRC 100505 / T-27), this protein is Aspartate carbamoyltransferase catalytic subunit.